Consider the following 478-residue polypeptide: MTDQRTLGSETAIERDVVVVGAGPAGLMAARTLVAAGRTVAVLEARDRVGGRTWSKTVDGAFLEIGGQWISPDQTELLALVDELGLETYQRYREGESVYLAPDGTRHTYTGSMFPAGESTIVEMEKLVALLDGLVAEIGATEPWAHPAARELDTISFHHWLRQHSDDEAACSNIGIFVAGGMLTKPAHAFSVLQAVLMAASAGSFSNLVDEDFILDRRVVGGMQSVSETMAAELGEDVVFLDTPVRTIRWAGDGGTYAEHVPGTPVTVWSDRLTVRAKDVVVAVPPNLYSRISFEPPLPRLQHQMHQHQSLGLVIKVHAVYETPFWRDKGLSGTGFGAHELSQEVYDNTNHGDPRGTLVGFVSDERADELFGLPAEERRRLILESLSHYLGEEALHPVVYYESDFGSEEWTRGAYAASYDLGGLHRYGAHQRTPVGPIRWACSDLAAEGYQHVDGALRQGRLAAAEVLGAGSLTGAER.

An FAD-binding site is contributed by 15 to 70 (RDVVVVGAGPAGLMAARTLVAAGRTVAVLEARDRVGGRTWSKTVDGAFLEIGGQWI).

It belongs to the flavin monoamine oxidase family. It depends on FAD as a cofactor.

It catalyses the reaction putrescine + O2 + H2O = 4-aminobutanal + H2O2 + NH4(+). The protein is Putrescine oxidase (puo) of Kocuria rosea (Deinococcus erythromyxa).